The chain runs to 700 residues: Long-chain-fatty-acid--CoA ligase 1 (700 aa).

Residues Met-1–Arg-21 form a disordered region. Residue Lys-189 forms a Glycyl lysine isopeptide (Lys-Gly) (interchain with G-Cter in ubiquitin) linkage. Tyr-269–Val-280 contacts ATP. Positions Asp-531–Tyr-580 match the FACS motif.

Belongs to the ATP-dependent AMP-binding enzyme family. Interacts with FAT1. It depends on Mg(2+) as a cofactor.

The protein localises to the lipid droplet. Its subcellular location is the cell membrane. The catalysed reaction is a long-chain fatty acid + ATP + CoA = a long-chain fatty acyl-CoA + AMP + diphosphate. It catalyses the reaction (9Z)-octadecenoate + ATP + CoA = (9Z)-octadecenoyl-CoA + AMP + diphosphate. It carries out the reaction hexadecanoate + ATP + CoA = hexadecanoyl-CoA + AMP + diphosphate. The enzyme catalyses (9Z)-hexadecenoate + ATP + CoA = (9Z)-hexadecenoyl-CoA + AMP + diphosphate. The catalysed reaction is tetradecanoate + ATP + CoA = tetradecanoyl-CoA + AMP + diphosphate. It catalyses the reaction (9Z)-tetradecenoate + ATP + CoA = (9Z)-tetradecenoyl-CoA + AMP + diphosphate. It carries out the reaction (9Z,12Z)-octadecadienoate + ATP + CoA = (9Z,12Z)-octadecadienoyl-CoA + AMP + diphosphate. The enzyme catalyses dodecanoate + ATP + CoA = dodecanoyl-CoA + AMP + diphosphate. The catalysed reaction is pentadecanoate + ATP + CoA = pentadecanoyl-CoA + AMP + diphosphate. It catalyses the reaction undecanoate + ATP + CoA = undecanoyl-CoA + AMP + diphosphate. It carries out the reaction heptadecanoate + ATP + CoA = heptadecanoyl-CoA + AMP + diphosphate. The enzyme catalyses octadecanoate + ATP + CoA = octadecanoyl-CoA + AMP + diphosphate. Its function is as follows. Activates long-chain fatty acids (LCFA) by esterification of the fatty acids into metabolically active CoA-thioesters for subsequent degradation or incorporation into phospholipids. Also facilitates the transport of LCFAs into the cell, either by active transport or by decreasing the intracellular LCFA concentration. It may supplement intracellular myristoyl-CoA pools from exogenous myristate. Preferentially acts on C12:0-C16:0 fatty acids with myristic and pentadecanic acid (C15:0) having the highest activities. Also involved in long-chain base (LCB) uptake of sphingolipids. In contrast ot LCFA uptake, LCB uptake does not require ATP, suggesting that the enzyme is directly involved in active LCB uptake. Involved in the sphingolipid-to-glycerolipid metabolic pathway, converting the sphingolipid metabolite hexadecenoic acid to hexadecenoyl-CoA, which is then further converted to glycerolipids. The chain is Long-chain-fatty-acid--CoA ligase 1 (FAA1) from Saccharomyces cerevisiae (strain ATCC 204508 / S288c) (Baker's yeast).